The primary structure comprises 115 residues: Large ribosomal subunit protein bL20c (115 aa).

The protein belongs to the bacterial ribosomal protein bL20 family.

It is found in the plastid. The protein resides in the chloroplast. In terms of biological role, binds directly to 23S ribosomal RNA and is necessary for the in vitro assembly process of the 50S ribosomal subunit. It is not involved in the protein synthesizing functions of that subunit. The sequence is that of Large ribosomal subunit protein bL20c from Gnetum parvifolium (Small-leaved jointfir).